A 388-amino-acid chain; its full sequence is Dual-specificity RNA methyltransferase RlmN (388 aa).

Glu109 (proton acceptor) is an active-site residue. A Radical SAM core domain is found at 115–354 (EEDRATLCVS…TIVRKTRGDD (240 aa)). Residues Cys122 and Cys359 are joined by a disulfide bond. The [4Fe-4S] cluster site is built by Cys129, Cys133, and Cys136. Residues 183-184 (GE), Ser215, 237-239 (SLH), and Asn316 each bind S-adenosyl-L-methionine. Catalysis depends on Cys359, which acts as the S-methylcysteine intermediate.

Belongs to the radical SAM superfamily. RlmN family. It depends on [4Fe-4S] cluster as a cofactor.

Its subcellular location is the cytoplasm. It carries out the reaction adenosine(2503) in 23S rRNA + 2 reduced [2Fe-2S]-[ferredoxin] + 2 S-adenosyl-L-methionine = 2-methyladenosine(2503) in 23S rRNA + 5'-deoxyadenosine + L-methionine + 2 oxidized [2Fe-2S]-[ferredoxin] + S-adenosyl-L-homocysteine. The catalysed reaction is adenosine(37) in tRNA + 2 reduced [2Fe-2S]-[ferredoxin] + 2 S-adenosyl-L-methionine = 2-methyladenosine(37) in tRNA + 5'-deoxyadenosine + L-methionine + 2 oxidized [2Fe-2S]-[ferredoxin] + S-adenosyl-L-homocysteine. Its function is as follows. Specifically methylates position 2 of adenine 2503 in 23S rRNA and position 2 of adenine 37 in tRNAs. m2A2503 modification seems to play a crucial role in the proofreading step occurring at the peptidyl transferase center and thus would serve to optimize ribosomal fidelity. The sequence is that of Dual-specificity RNA methyltransferase RlmN from Klebsiella pneumoniae subsp. pneumoniae (strain ATCC 700721 / MGH 78578).